Reading from the N-terminus, the 635-residue chain is Cationic amino acid transporter 4 (635 aa).

3 helical membrane passes run 42 to 62 (LTLL…TGTV), 66 to 86 (MAGP…LLAA), and 113 to 133 (IWAF…GAAV). Residues Asn-146, Asn-151, and Asn-195 are each glycosylated (N-linked (GlcNAc...) asparagine). The chain crosses the membrane as a helical span at residues 197 to 217 (TFSAISLIVILFIIVLGFILA). N-linked (GlcNAc...) asparagine glycosylation occurs at Asn-221. 5 helical membrane passes run 229–249 (FAPF…YAFV), 270–290 (MAIA…STVL), 318–338 (GFIV…SNLF), 365–385 (QVPV…ALLL), and 391–411 (VQFL…SIIV). A phosphoserine mark is found at Ser-422 and Ser-427. A run of 4 helical transmembrane segments spans residues 478 to 498 (VAWA…VLVF), 508 to 528 (WGYV…LLVL), 539 to 559 (TFQI…NTCL), and 567 to 587 (TWLR…GYGI).

This sequence belongs to the amino acid-polyamine-organocation (APC) superfamily. Cationic amino acid transporter (CAT) (TC 2.A.3.3) family.

It localises to the membrane. Its function is as follows. Involved in the transport of the cationic amino acids (arginine, lysine and ornithine). In Mus musculus (Mouse), this protein is Cationic amino acid transporter 4 (Slc7a4).